Here is a 511-residue protein sequence, read N- to C-terminus: Portal protein (511 aa).

It belongs to the Tevenvirinae portal protein family. As to quaternary structure, homododecamer. Interacts with the large terminase subunit. Interacts with the major capsid protein. Interacts with the capsid vertex protein.

Its subcellular location is the virion. Forms the portal vertex of the capsid. This portal plays critical roles in head assembly, genome packaging, neck/tail attachment, and genome ejection. The portal protein multimerizes as a single ring-shaped homododecamer arranged around a central channel. Binds to the terminase subunits to form the packaging machine. The sequence is that of Portal protein from Vibrio phage KVP40 (isolate Vibrio parahaemolyticus/Japan/Matsuzaki/1991) (KVP40).